We begin with the raw amino-acid sequence, 480 residues long: ESX-1 secretion system ATPase EccB1 (480 aa).

Residues 44-64 traverse the membrane as a helical segment; it reads IALGIVVAVLILAGAALLAYF. The disordered stretch occupies residues 461–480; that stretch reads DTLPADPSPRKVPAGASGAP.

This sequence belongs to the EccB family. As to quaternary structure, part of the ESX-1 / type VII secretion system (T7SS), which is composed of cytosolic and membrane components. The ESX-1 membrane complex is composed of EccB1, EccCa1, EccCb1, EccD1 and EccE1.

It is found in the cell inner membrane. In terms of biological role, an ATPase. Part of the ESX-1 specialized secretion system, which delivers several virulence factors to host cells during infection, including the key virulence factors EsxA (ESAT-6) and EsxB (CFP-10). This chain is ESX-1 secretion system ATPase EccB1, found in Mycobacterium tuberculosis (strain CDC 1551 / Oshkosh).